The primary structure comprises 110 residues: uncharacterized protein (110 aa).

3 helical membrane-spanning segments follow: residues 5–25, 62–82, and 90–110; these read ILAIIFVAVGTYLIRYIPIHL, FPIIFSNVLISTISLIFAIVS, and GISILISVVIYYLASKFLISI.

This sequence to A.fulgidus AF1754.

It is found in the cell membrane. This is an uncharacterized protein from Methanocaldococcus jannaschii (strain ATCC 43067 / DSM 2661 / JAL-1 / JCM 10045 / NBRC 100440) (Methanococcus jannaschii).